Consider the following 193-residue polypeptide: Phosphoheptose isomerase (193 aa).

Positions 37–193 (LANAFKAGGK…QLIEKEMADQ (157 aa)) constitute an SIS domain. 52 to 54 (NGG) contributes to the substrate binding site. His61 and Glu65 together coordinate Zn(2+). Residues Glu65, 93–94 (ND), 119–121 (STS), Ser124, and Gln172 contribute to the substrate site. Zn(2+)-binding residues include Gln172 and His180.

The protein belongs to the SIS family. GmhA subfamily. As to quaternary structure, homotetramer. Zn(2+) serves as cofactor.

The protein localises to the cytoplasm. It catalyses the reaction 2 D-sedoheptulose 7-phosphate = D-glycero-alpha-D-manno-heptose 7-phosphate + D-glycero-beta-D-manno-heptose 7-phosphate. It functions in the pathway carbohydrate biosynthesis; D-glycero-D-manno-heptose 7-phosphate biosynthesis; D-glycero-alpha-D-manno-heptose 7-phosphate and D-glycero-beta-D-manno-heptose 7-phosphate from sedoheptulose 7-phosphate: step 1/1. In terms of biological role, catalyzes the isomerization of sedoheptulose 7-phosphate in D-glycero-D-manno-heptose 7-phosphate. This is Phosphoheptose isomerase from Pectobacterium atrosepticum (strain SCRI 1043 / ATCC BAA-672) (Erwinia carotovora subsp. atroseptica).